The primary structure comprises 275 residues: 3-methyl-2-oxobutanoate hydroxymethyltransferase (275 aa).

Asp44 and Asp83 together coordinate Mg(2+). Residues 44 to 45 (DS), Asp83, and Lys113 each bind 3-methyl-2-oxobutanoate. Glu115 is a Mg(2+) binding site. Glu182 acts as the Proton acceptor in catalysis.

It belongs to the PanB family. In terms of assembly, homodecamer; pentamer of dimers. It depends on Mg(2+) as a cofactor.

It localises to the cytoplasm. It carries out the reaction 3-methyl-2-oxobutanoate + (6R)-5,10-methylene-5,6,7,8-tetrahydrofolate + H2O = 2-dehydropantoate + (6S)-5,6,7,8-tetrahydrofolate. The protein operates within cofactor biosynthesis; (R)-pantothenate biosynthesis; (R)-pantoate from 3-methyl-2-oxobutanoate: step 1/2. Functionally, catalyzes the reversible reaction in which hydroxymethyl group from 5,10-methylenetetrahydrofolate is transferred onto alpha-ketoisovalerate to form ketopantoate. This is 3-methyl-2-oxobutanoate hydroxymethyltransferase from Clostridium beijerinckii (strain ATCC 51743 / NCIMB 8052) (Clostridium acetobutylicum).